A 514-amino-acid polypeptide reads, in one-letter code: Cytochrome P450 monooxygenase aneD (514 aa).

A helical membrane pass occupies residues 6-26 (ICTLLAVIATTSLGLLFLSII). 3 N-linked (GlcNAc...) asparagine glycosylation sites follow: asparagine 113, asparagine 261, and asparagine 347. Residue cysteine 424 participates in heme binding.

The protein belongs to the cytochrome P450 family. Heme is required as a cofactor.

It is found in the membrane. It carries out the reaction asperaculane D + reduced [NADPH--hemoprotein reductase] + O2 = asperaculane E + oxidized [NADPH--hemoprotein reductase] + H2O + H(+). The protein operates within secondary metabolite biosynthesis. Its function is as follows. Cytochrome P450 monooxygenase; part of the gene cluster that mediates the biosynthesis of aculenes, a unique type of norsesquiterpenes that contain a nordaucane skeleton linked to an L-proline moiety and are of mixed biosynthetic origin. The pathway begins with the synthesis of dauca-4,7-diene by the terpene cyclase aneC using farnesyl pyrophosphate (FPP) as substrate. The cytochrome P450 monooxygenase aneF then performs the initial oxidation at C-12 of dauca-4,7-diene to yield asperaculane D. Asperaculane D is substrate of the cytochrome P450 monooxygenase aneD for C-10 hydroxylation to yield asperaculane E. The cytochrome P450 monooxygenase aneG then converts asperaculane E into aculene D via C-2 oxidation. The monomodular nonribosomal peptide synthtase aneB adenylates L-proline and the thiohydrolase aneE transfers this activated L-proline derivative to aculenes D and C to produce respectively aculenes B and A. The dioxygenase aneA converts aculene D into aculene C, and aculene B into aculene A by introducing the 5,6-alkene moiety. Asperculanes A, B, C and F, as well as 14-prolyl asperculane C, might be shunt products of the pathway. In Aspergillus aculeatus (strain ATCC 16872 / CBS 172.66 / WB 5094), this protein is Cytochrome P450 monooxygenase aneD.